Here is a 155-residue protein sequence, read N- to C-terminus: Pathogenesis-related protein B (155 aa).

It belongs to the BetVI family.

This is Pathogenesis-related protein B (PCPR1-3) from Petroselinum crispum (Parsley).